Here is a 426-residue protein sequence, read N- to C-terminus: Histidine--tRNA ligase (426 aa).

It belongs to the class-II aminoacyl-tRNA synthetase family. Homodimer.

It is found in the cytoplasm. It carries out the reaction tRNA(His) + L-histidine + ATP = L-histidyl-tRNA(His) + AMP + diphosphate + H(+). In Streptococcus pyogenes serotype M3 (strain ATCC BAA-595 / MGAS315), this protein is Histidine--tRNA ligase.